We begin with the raw amino-acid sequence, 187 residues long: MYLYKKNYYGYAESLLDISISENNVEKYINDCFFILSIIQNNQVLILLFKSHFIGKQEKFNIIDKIFSAKIEKILVNFLKVIAKNNLFLYYKQILLKYIKLANSHLSQTWGEIETAFPISSVMTSSFESILSKKLGKKVHLRHKINSKLISGIRIIVDNQIFENSLFSELKLLKQNLKKHLITKNDL.

The protein belongs to the ATPase delta chain family. In terms of assembly, F-type ATPases have 2 components, F(1) - the catalytic core - and F(0) - the membrane proton channel. F(1) has five subunits: alpha(3), beta(3), gamma(1), delta(1), epsilon(1). F(0) has three main subunits: a(1), b(2) and c(10-14). The alpha and beta chains form an alternating ring which encloses part of the gamma chain. F(1) is attached to F(0) by a central stalk formed by the gamma and epsilon chains, while a peripheral stalk is formed by the delta and b chains.

The protein resides in the cell membrane. F(1)F(0) ATP synthase produces ATP from ADP in the presence of a proton or sodium gradient. F-type ATPases consist of two structural domains, F(1) containing the extramembraneous catalytic core and F(0) containing the membrane proton channel, linked together by a central stalk and a peripheral stalk. During catalysis, ATP synthesis in the catalytic domain of F(1) is coupled via a rotary mechanism of the central stalk subunits to proton translocation. Its function is as follows. This protein is part of the stalk that links CF(0) to CF(1). It either transmits conformational changes from CF(0) to CF(1) or is implicated in proton conduction. The sequence is that of ATP synthase subunit delta from Mesomycoplasma hyopneumoniae (strain J / ATCC 25934 / NCTC 10110) (Mycoplasma hyopneumoniae).